Here is a 119-residue protein sequence, read N- to C-terminus: Immunoglobulin heavy variable 2-26 (119 aa).

Positions 1-19 (MDTLCYTLLLLTTPSWVLS) are cleaved as a signal peptide. At Q20 the chain carries Pyrrolidone carboxylic acid. Residues 20–44 (QVTLKESGPVLVKPTETLTLTCTVS) form a framework-1 region. The region spanning 20–119 (QVTLKESGPV…DTATYYCARI (100 aa)) is the Ig-like domain. The cysteines at positions 41 and 116 are disulfide-linked. The segment at 45–54 (GFSLSNARMG) is complementarity-determining-1. Positions 55-71 (VSWIRQPPGKALEWLAH) are framework-2. The interval 72–78 (IFSNDEK) is complementarity-determining-2. Residues 79–116 (SYSTSLKSRLTISKDTSKSQVVLTMTNMDPVDTATYYC) are framework-3. The segment at 117 to 119 (ARI) is complementarity-determining-3.

In terms of assembly, immunoglobulins are composed of two identical heavy chains and two identical light chains; disulfide-linked.

The protein localises to the secreted. It localises to the cell membrane. Its function is as follows. V region of the variable domain of immunoglobulin heavy chains that participates in the antigen recognition. Immunoglobulins, also known as antibodies, are membrane-bound or secreted glycoproteins produced by B lymphocytes. In the recognition phase of humoral immunity, the membrane-bound immunoglobulins serve as receptors which, upon binding of a specific antigen, trigger the clonal expansion and differentiation of B lymphocytes into immunoglobulins-secreting plasma cells. Secreted immunoglobulins mediate the effector phase of humoral immunity, which results in the elimination of bound antigens. The antigen binding site is formed by the variable domain of one heavy chain, together with that of its associated light chain. Thus, each immunoglobulin has two antigen binding sites with remarkable affinity for a particular antigen. The variable domains are assembled by a process called V-(D)-J rearrangement and can then be subjected to somatic hypermutations which, after exposure to antigen and selection, allow affinity maturation for a particular antigen. The sequence is that of Immunoglobulin heavy variable 2-26 from Homo sapiens (Human).